Here is a 552-residue protein sequence, read N- to C-terminus: Urocanate hydratase (552 aa).

NAD(+) contacts are provided by residues 49–50, Gln-127, 173–175, Asp-193, 239–240, 260–264, 270–271, and Tyr-319; these read GG, GMG, NA, QTSAH, and YI. Cys-407 is an active-site residue. Residue Gly-489 participates in NAD(+) binding.

The protein belongs to the urocanase family. Requires NAD(+) as cofactor.

It is found in the cytoplasm. The enzyme catalyses 4-imidazolone-5-propanoate = trans-urocanate + H2O. It participates in amino-acid degradation; L-histidine degradation into L-glutamate; N-formimidoyl-L-glutamate from L-histidine: step 2/3. Catalyzes the conversion of urocanate to 4-imidazolone-5-propionate. The sequence is that of Urocanate hydratase from Bacillus cereus (strain AH820).